A 300-amino-acid chain; its full sequence is MTKHLPTISDISPLLKAEILAEALPYIRAYHGKTIVIKYGGNAMVEERLKESFARDVILLKLVGMNPVVVHGGGPQIDEALKKIGKTGTFIQGMRVTDEETMEVVEWVLGGEVQQDIVMLINHFGGQAVGLTGKDGGLIHAKKMMIPSDAEPGKKIDIGFVGEIEAINPAVVKALQDDAFIPVISPIGFSAEGQAYNINADLVAGKMAEILHAEKLVMMTNIPGVMDKDGKLLTDLTAREIDALFADGTISGGMLPKISSALDAAKSGVNSVHIIDGRIEHSLLLEILTEQAFGTMIRSR.

Residues 73 to 74 (GG), R95, and N197 contribute to the substrate site.

The protein belongs to the acetylglutamate kinase family. ArgB subfamily.

It localises to the cytoplasm. It catalyses the reaction N-acetyl-L-glutamate + ATP = N-acetyl-L-glutamyl 5-phosphate + ADP. The protein operates within amino-acid biosynthesis; L-arginine biosynthesis; N(2)-acetyl-L-ornithine from L-glutamate: step 2/4. Functionally, catalyzes the ATP-dependent phosphorylation of N-acetyl-L-glutamate. In Polynucleobacter asymbioticus (strain DSM 18221 / CIP 109841 / QLW-P1DMWA-1) (Polynucleobacter necessarius subsp. asymbioticus), this protein is Acetylglutamate kinase.